A 347-amino-acid polypeptide reads, in one-letter code: Quinolinate synthase (347 aa).

Iminosuccinate contacts are provided by histidine 47 and serine 68. Cysteine 113 lines the [4Fe-4S] cluster pocket. Residues 139-141 and serine 156 contribute to the iminosuccinate site; that span reads YAN. [4Fe-4S] cluster is bound at residue cysteine 200. Residues 226-228 and threonine 243 each bind iminosuccinate; that span reads HPE. Residue cysteine 297 coordinates [4Fe-4S] cluster.

It belongs to the quinolinate synthase family. Type 1 subfamily. Requires [4Fe-4S] cluster as cofactor.

It is found in the cytoplasm. The catalysed reaction is iminosuccinate + dihydroxyacetone phosphate = quinolinate + phosphate + 2 H2O + H(+). It participates in cofactor biosynthesis; NAD(+) biosynthesis; quinolinate from iminoaspartate: step 1/1. Catalyzes the condensation of iminoaspartate with dihydroxyacetone phosphate to form quinolinate. This chain is Quinolinate synthase, found in Enterobacter sp. (strain 638).